Reading from the N-terminus, the 200-residue chain is Guanylate kinase (200 aa).

Positions 4–183 (GAVLIISGPS…AKEAMVAIAR (180 aa)) constitute a Guanylate kinase-like domain. 11 to 18 (GPSGCGKS) is a binding site for ATP.

It belongs to the guanylate kinase family.

It localises to the cytoplasm. It carries out the reaction GMP + ATP = GDP + ADP. Essential for recycling GMP and indirectly, cGMP. This chain is Guanylate kinase, found in Helicobacter hepaticus (strain ATCC 51449 / 3B1).